A 189-amino-acid polypeptide reads, in one-letter code: Peptidyl-tRNA hydrolase (189 aa).

Tyr15 is a binding site for tRNA. The active-site Proton acceptor is the His20. TRNA-binding residues include Phe66, Asn68, and Asn114.

This sequence belongs to the PTH family. In terms of assembly, monomer.

The protein localises to the cytoplasm. The catalysed reaction is an N-acyl-L-alpha-aminoacyl-tRNA + H2O = an N-acyl-L-amino acid + a tRNA + H(+). Hydrolyzes ribosome-free peptidyl-tRNAs (with 1 or more amino acids incorporated), which drop off the ribosome during protein synthesis, or as a result of ribosome stalling. In terms of biological role, catalyzes the release of premature peptidyl moieties from peptidyl-tRNA molecules trapped in stalled 50S ribosomal subunits, and thus maintains levels of free tRNAs and 50S ribosomes. This chain is Peptidyl-tRNA hydrolase, found in Streptococcus equi subsp. zooepidemicus (strain H70).